We begin with the raw amino-acid sequence, 593 residues long: NADH-quinone oxidoreductase subunit C/D (593 aa).

The NADH dehydrogenase I subunit C stretch occupies residues 1 to 184 (MTADNAIFIP…DPYSLTLAKQ (184 aa)). An NADH dehydrogenase I subunit D region spans residues 208–593 (DYMFLNLGPN…IDFVMADVDR (386 aa)).

In the N-terminal section; belongs to the complex I 30 kDa subunit family. This sequence in the C-terminal section; belongs to the complex I 49 kDa subunit family. As to quaternary structure, NDH-1 is composed of 13 different subunits. Subunits NuoB, CD, E, F, and G constitute the peripheral sector of the complex.

The protein localises to the cell inner membrane. The enzyme catalyses a quinone + NADH + 5 H(+)(in) = a quinol + NAD(+) + 4 H(+)(out). Functionally, NDH-1 shuttles electrons from NADH, via FMN and iron-sulfur (Fe-S) centers, to quinones in the respiratory chain. The immediate electron acceptor for the enzyme in this species is believed to be ubiquinone. Couples the redox reaction to proton translocation (for every two electrons transferred, four hydrogen ions are translocated across the cytoplasmic membrane), and thus conserves the redox energy in a proton gradient. The chain is NADH-quinone oxidoreductase subunit C/D from Pseudomonas putida (strain GB-1).